A 206-amino-acid polypeptide reads, in one-letter code: Interleukin-24 (206 aa).

Positions 1–51 are cleaved as a signal peptide; the sequence is MNFQQRLQSLWTLARPFCPPLLATASQMQMVVLPCLGFTLLLWSQVSGAQG. The cysteines at positions 59 and 106 are disulfide-linked. Asparagine 85 and asparagine 99 each carry an N-linked (GlcNAc...) asparagine glycan. Residue lysine 122 forms a Glycyl lysine isopeptide (Lys-Gly) (interchain with G-Cter in ubiquitin) linkage. N-linked (GlcNAc...) asparagine glycosylation is present at asparagine 126.

Belongs to the IL-10 family. In terms of processing, glycosylated. Ubiquitination at Lys-122 promotes proteasomal degradation. In terms of tissue distribution, up-regulated in melanoma cells induced to terminally differentiate.

It localises to the secreted. Its function is as follows. Multifunctional cytokine mainly produced by T-cells that plays a regulatory role in immune response, tissue homeostasis, host defense, and oncogenesis. Possesses antiviral functions and induces the type I interferon response during influenza infection. Signals through two receptor complexes IL20RA/IL20RB or IL20RB/IL22RA1. In turn, stimulates the JAK1-STAT3 and MAPK pathways and promotes the secretion of pro-inflammatory mediators including IL8 and MMP1. Intracellularly, maintains endoplasmic reticulum homeostasis by restricting the eIF2alpha-CHOP pathway-mediated stress signal. In addition, acts as a quality control mechanism for the ubiquitin proteasome system by alerting the cell to proteasome dysfunction through activation of PKR/EIF2AK2. This Homo sapiens (Human) protein is Interleukin-24 (IL24).